The following is a 648-amino-acid chain: DNA helicase/primase complex-associated protein (648 aa).

The interval 43 to 63 (LWPSDQNNTASPAGAKTDQPT) is disordered.

It belongs to the herpesviridae HEPA family. Associates with the primase and the helicase to form the helicase-primase complex. Interacts with the origin-binding protein. Interacts with the polymerase catalytic subunit.

It is found in the host nucleus. Its function is as follows. Component of the helicase/primase complex. Unwinds the DNA at the replication forks and generates single-stranded DNA for both leading and lagging strand synthesis. The primase synthesizes short RNA primers on the lagging strand that the polymerase presumably elongates using dNTPs. The primase-associated factor has no known catalytic activity in the complex and may serve to facilitate the formation of the replisome by directly interacting with the origin-binding protein and the polymerase. This Amazona oratrix (yellow-headed parrot) protein is DNA helicase/primase complex-associated protein (UL8).